Consider the following 105-residue polypeptide: N(4)-acetylcytidine amidohydrolase (105 aa).

The 87-residue stretch at 7–93 folds into the ASCH domain; sequence TFFERFEHDI…VIAEIYPGLE (87 aa). The active-site Proton acceptor is the Lys21. Residue Thr24 is the Nucleophile of the active site. Glu74 serves as the catalytic Proton donor.

This sequence belongs to the N(4)-acetylcytidine amidohydrolase family.

It carries out the reaction N(4)-acetylcytidine + H2O = cytidine + acetate + H(+). It catalyses the reaction N(4)-acetyl-2'-deoxycytidine + H2O = 2'-deoxycytidine + acetate + H(+). The enzyme catalyses N(4)-acetylcytosine + H2O = cytosine + acetate + H(+). Its function is as follows. Catalyzes the hydrolysis of N(4)-acetylcytidine (ac4C). The chain is N(4)-acetylcytidine amidohydrolase from Shewanella baltica (strain OS185).